A 633-amino-acid polypeptide reads, in one-letter code: tRNA uridine 5-carboxymethylaminomethyl modification enzyme MnmG (633 aa).

13-18 (GGGHAG) contributes to the FAD binding site. 273-287 (GPRYCPSIEDKINRF) contributes to the NAD(+) binding site.

It belongs to the MnmG family. In terms of assembly, homodimer. Heterotetramer of two MnmE and two MnmG subunits. Requires FAD as cofactor.

Its subcellular location is the cytoplasm. NAD-binding protein involved in the addition of a carboxymethylaminomethyl (cmnm) group at the wobble position (U34) of certain tRNAs, forming tRNA-cmnm(5)s(2)U34. This Pseudoalteromonas atlantica (strain T6c / ATCC BAA-1087) protein is tRNA uridine 5-carboxymethylaminomethyl modification enzyme MnmG.